Consider the following 266-residue polypeptide: GTP cyclohydrolase III (266 aa).

This sequence belongs to the archaeal-type GTP cyclohydrolase family.

The catalysed reaction is GTP + 3 H2O = 2-amino-5-formylamino-6-(5-phospho-D-ribosylamino)pyrimidin-4(3H)-one + 2 phosphate + 2 H(+). Its function is as follows. Catalyzes the formation of 2-amino-5-formylamino-6-ribofuranosylamino-4(3H)-pyrimidinone ribonucleotide monophosphate and inorganic phosphate from GTP. Also has an independent pyrophosphate phosphohydrolase activity. This chain is GTP cyclohydrolase III, found in Methanococcus vannielii (strain ATCC 35089 / DSM 1224 / JCM 13029 / OCM 148 / SB).